Here is a 148-residue protein sequence, read N- to C-terminus: MTITQVKIKKLENFSGSLPEYATEHSAGMDLIAANEQPITIKAAAIQLIPTGIAIALPDSFEAQIRPRSGLAVKHGITVANSPGTIDADYRGEIKVILINLGKEDFIIEKGMRIAQMIIAKYERILWEESISLMETMRGSGGFGSTSV.

Substrate-binding positions include 68 to 70 (RSG), Asn-81, 85 to 87 (TID), and Lys-95.

Belongs to the dUTPase family. Mg(2+) is required as a cofactor.

The enzyme catalyses dUTP + H2O = dUMP + diphosphate + H(+). The protein operates within pyrimidine metabolism; dUMP biosynthesis; dUMP from dCTP (dUTP route): step 2/2. Its function is as follows. This enzyme is involved in nucleotide metabolism: it produces dUMP, the immediate precursor of thymidine nucleotides and it decreases the intracellular concentration of dUTP so that uracil cannot be incorporated into DNA. This Rickettsia peacockii (strain Rustic) protein is Deoxyuridine 5'-triphosphate nucleotidohydrolase.